The following is a 260-amino-acid chain: Small ribosomal subunit protein eS1 (260 aa).

A compositionally biased stretch (basic residues) spans 1-18 (MAVGKNKRMSKGKKGGKK). A disordered region spans residues 1-20 (MAVGKNKRMSKGKKGGKKKA).

It belongs to the eukaryotic ribosomal protein eS1 family. In terms of assembly, component of the small ribosomal subunit. Mature ribosomes consist of a small (40S) and a large (60S) subunit. The 40S subunit contains about 33 different proteins and 1 molecule of RNA (18S). The 60S subunit contains about 49 different proteins and 3 molecules of RNA (25S, 5.8S and 5S).

Its subcellular location is the cytoplasm. The chain is Small ribosomal subunit protein eS1 from Ostreococcus lucimarinus (strain CCE9901).